We begin with the raw amino-acid sequence, 350 residues long: S-adenosylmethionine:tRNA ribosyltransferase-isomerase (350 aa).

It belongs to the QueA family. In terms of assembly, monomer.

The protein resides in the cytoplasm. It catalyses the reaction 7-aminomethyl-7-carbaguanosine(34) in tRNA + S-adenosyl-L-methionine = epoxyqueuosine(34) in tRNA + adenine + L-methionine + 2 H(+). It participates in tRNA modification; tRNA-queuosine biosynthesis. Transfers and isomerizes the ribose moiety from AdoMet to the 7-aminomethyl group of 7-deazaguanine (preQ1-tRNA) to give epoxyqueuosine (oQ-tRNA). The chain is S-adenosylmethionine:tRNA ribosyltransferase-isomerase from Vibrio parahaemolyticus serotype O3:K6 (strain RIMD 2210633).